Consider the following 266-residue polypeptide: Apolipoprotein A-I (266 aa).

An N-terminal signal peptide occupies residues 1 to 18; that stretch reads MKAVVLTLAVLFLTGSQA. A run of 2 repeats spans residues 67–88 and 89–110. The segment at 67–266 is 10 X approximate tandem repeats; that stretch reads LKLLDNWDSL…DEAAKKLNAQ (200 aa). Methionine sulfoxide is present on methionine 109. Residues 111-121 form a 3; half-length repeat; it reads KDLEEVKQKVQ. Tandem repeats lie at residues 122 to 142, 144 to 165, 166 to 187, 188 to 210, and 211 to 231. One copy of the 9; half-length repeat lies at 232 to 242; the sequence is PALEDLRQGLL. Repeat unit 10 spans residues 243 to 266; it reads PVLESFKVSLLAAVDEAAKKLNAQ.

This sequence belongs to the apolipoprotein A1/A4/E family. As to quaternary structure, homodimer. Interacts with APOA1BP and CLU. Component of a sperm activating protein complex (SPAP), consisting of APOA1, an immunoglobulin heavy chain, an immunoglobulin light chain and albumin. Interacts with NDRG1. Interacts with SCGB3A2. Interacts with NAXE and YJEFN3. In terms of processing, glycosylated. Post-translationally, palmitoylated. Phosphorylation sites are present in the extracellular medium. Major protein of plasma HDL, also found in chylomicrons.

Its subcellular location is the secreted. In terms of biological role, participates in the reverse transport of cholesterol from tissues to the liver for excretion by promoting cholesterol efflux from tissues and by acting as a cofactor for the lecithin cholesterol acyltransferase (LCAT). As part of the SPAP complex, activates spermatozoa motility. This is Apolipoprotein A-I (APOA1) from Ailuropoda melanoleuca (Giant panda).